The following is an 815-amino-acid chain: MLKPHPEHKEQPQDSFTPSGDSTPDASMAEERDFMRSVLPVYDSFHPEDSSLALPLANKLTLADAHRLNRLQQQVQLTLSRKKRKPKPADSSLAESQSSCQISSSSSLGSLHLKRTFSVNHEATRSLRMVDRSQWPSMEPPLFHRGYGSFRYTPKRAGLCLGSNSLTLPSAPTTSHFQMNKLPLRYAHSEVLRNPRFAGLSAATQIPSSPVYENPHTDDTDDVFLPSTSVERGRMESEKHTLQQTLCKQREGGFVALEQSENVSWQSRVRKPSLEFVAGRRPSQTGSLISMEEQSGSLGRIEKLEVKQHAVTTLTKKGKPGELSAEMTLKEAVNLLTQDNNMETQIAAANFIQNQCFNSPDAKRKILHLQGIPKLLKLMQNDSEELQWAAVSSLRNIVFENNENKMEVKDCEGLPVILRLLKINRDIETRRQLTGLLWNLSSHDLLKEHLSREAVKPLTDSVLVPCSGISEGEDPKLELLADPDIFYNATGCLRNLSSAGPDGRKVMRDCEGLIECVIYYIRGTIADYKPDDKATENCVCILHNLSYRFDCEVPRVDSPVAQKPKQTHTETSNPGCFIIKTPKNSAENLEADEDYPALEENGSPHGVEWLWSAITVRMYLSLIAVSTNQHTKQASIGTLQNLTACSGEISQAIAHFIVQKEGGLSQVKKLLQEAEKEELRISVSLLKNISRYRELHADIVKQVLPELVAILPNSDRNVEQPIEITVTICHILINLSQASASNTCAIINQGALPKIISISSKDNGFGPTRAGQAACVLLHTLWRHSELHSSFKKAGYRKTDFINNRTVKAVNSARE.

A compositionally biased stretch (basic and acidic residues) spans 1–12 (MLKPHPEHKEQP). Disordered regions lie at residues 1-31 (MLKP…MAEE) and 76-105 (QLTL…ISSS). The segment covering 13 to 25 (QDSFTPSGDSTPD) has biased composition (polar residues). Residues 91–105 (SSLAESQSSCQISSS) are compositionally biased toward low complexity. ARM repeat units lie at residues 317-357 (KGKP…NQCF), 360-399 (PDAK…NIVF), 402-442 (NENK…NLSS), 457-498 (PLTD…NLSS), 501-547 (PDGR…NLSY), 604-644 (PHGV…NLTA), 652-691 (AIAH…NISR), 693-737 (RELH…NLSQ), and 740-783 (ASNT…TLWR).

This sequence belongs to the beta-catenin family.

Its subcellular location is the nucleus. It is found in the cell junction. The protein localises to the desmosome. It localises to the cytoplasm. Its function is as follows. Required for development of the heart, potentially via cell-cell adhesion and modulation of expression of cardiac precursor genes. Plays a role in desmosome cell-cell junctions and their intracellular connectivity. The sequence is that of Plakophilin-2 from Danio rerio (Zebrafish).